Consider the following 611-residue polypeptide: Mitogen-activated protein kinase 10 (611 aa).

A Protein kinase domain is found at 25-316; sequence YKIQEVIGKG…AEEALAHPYF (292 aa). ATP-binding positions include 31–39 and lysine 54; that span reads IGKGSYGVV. Residue aspartate 151 is the Proton acceptor of the active site. Position 187 is a phosphothreonine (threonine 187). A TXY motif is present at residues 187–189; that stretch reads TDY. Residue tyrosine 189 is modified to Phosphotyrosine. Residues 394-481 form a disordered region; it reads ENGGNGPVIP…RVVGPVLPYE (88 aa). Residues 426 to 439 show a composition bias toward basic and acidic residues; that stretch reads EQPRIGPSRDKPSD.

This sequence belongs to the protein kinase superfamily. CMGC Ser/Thr protein kinase family. MAP kinase subfamily. Dually phosphorylated on Thr-187 and Tyr-189, which activates the enzyme.

The catalysed reaction is L-seryl-[protein] + ATP = O-phospho-L-seryl-[protein] + ADP + H(+). The enzyme catalyses L-threonyl-[protein] + ATP = O-phospho-L-threonyl-[protein] + ADP + H(+). Its activity is regulated as follows. Activated by threonine and tyrosine phosphorylation. This chain is Mitogen-activated protein kinase 10 (MPK10), found in Oryza sativa subsp. japonica (Rice).